The primary structure comprises 422 residues: Enolase (422 aa).

(2R)-2-phosphoglycerate is bound at residue glutamine 162. The Proton donor role is filled by glutamate 204. Aspartate 241, glutamate 284, and aspartate 311 together coordinate Mg(2+). Positions 336, 365, 366, and 387 each coordinate (2R)-2-phosphoglycerate. Lysine 336 acts as the Proton acceptor in catalysis.

The protein belongs to the enolase family. In terms of assembly, component of the RNA degradosome, a multiprotein complex involved in RNA processing and mRNA degradation. It depends on Mg(2+) as a cofactor.

The protein resides in the cytoplasm. Its subcellular location is the secreted. It localises to the cell surface. The enzyme catalyses (2R)-2-phosphoglycerate = phosphoenolpyruvate + H2O. It functions in the pathway carbohydrate degradation; glycolysis; pyruvate from D-glyceraldehyde 3-phosphate: step 4/5. Its function is as follows. Catalyzes the reversible conversion of 2-phosphoglycerate (2-PG) into phosphoenolpyruvate (PEP). It is essential for the degradation of carbohydrates via glycolysis. The protein is Enolase of Legionella pneumophila (strain Corby).